A 226-amino-acid polypeptide reads, in one-letter code: ATP synthase subunit a (226 aa).

The next 5 helical transmembrane spans lie at 20-40 (LNWF…WLMP), 74-94 (FVSL…PYIF), 100-120 (LTLT…YGWI), 162-182 (LTAN…TGPM), and 187-207 (IILS…SAVA).

The protein belongs to the ATPase A chain family. In terms of assembly, F-type ATPases have 2 components, CF(1) - the catalytic core - and CF(0) - the membrane proton channel. CF(1) has five subunits: alpha(3), beta(3), gamma(1), delta(1), epsilon(1). CF(0) has three main subunits: a, b and c.

The protein localises to the mitochondrion inner membrane. In terms of biological role, mitochondrial membrane ATP synthase (F(1)F(0) ATP synthase or Complex V) produces ATP from ADP in the presence of a proton gradient across the membrane which is generated by electron transport complexes of the respiratory chain. F-type ATPases consist of two structural domains, F(1) - containing the extramembraneous catalytic core and F(0) - containing the membrane proton channel, linked together by a central stalk and a peripheral stalk. During catalysis, ATP synthesis in the catalytic domain of F(1) is coupled via a rotary mechanism of the central stalk subunits to proton translocation. Key component of the proton channel; it may play a direct role in the translocation of protons across the membrane. The sequence is that of ATP synthase subunit a (mt:ATPase6) from Aedes albopictus (Asian tiger mosquito).